The chain runs to 1253 residues: Structural polyprotein (1253 aa).

The segment at 43 to 77 is host transcription inhibition; that stretch reads VQAQQMQQLISAVSALTTKQNGKAPKKPKKKPQKA. Residues 58–110 form a disordered region; sequence LTTKQNGKAPKKPKKKPQKAKAKKNEQQKKNENKKPPPKQKNPAKKKKPGKRE. A compositionally biased stretch (basic residues) spans 66-79; the sequence is APKKPKKKPQKAKA. Residues 70–106 carry the Nuclear localization signal motif; sequence PKKKPQKAKAKKNEQQKKNENKKPPPKQKNPAKKKKP. Residues 80-92 are compositionally biased toward basic and acidic residues; the sequence is KKNEQQKKNENKK. The binding to the viral RNA stretch occupies residues 90–121; it reads NKKPPPKQKNPAKKKKPGKRERMCMKIENDCI. Basic residues predominate over residues 93–108; that stretch reads PPPKQKNPAKKKKPGK. The segment at 106-120 is ribosome-binding; the sequence is PGKRERMCMKIENDC. A disulfide bridge connects residues cysteine 120 and cysteine 135. In terms of domain architecture, Peptidase S3 spans 120-268; that stretch reads CIFEVKLDGK…RYTPEGTEEW (149 aa). Histidine 146 functions as the Charge relay system in the catalytic mechanism. Residues 151–161 carry the Nuclear export signal motif; it reads IDNPDLAKLTY. Residues 162–167 are interaction with spike glycoprotein E2; that stretch reads KKSSKY. Catalysis depends on aspartate 168, which acts as the Charge relay system. The tract at residues 190–200 is dimerization of the capsid protein; that stretch reads PEGHYNWHHGA. The active-site Charge relay system is the serine 220. The segment at 226-230 is dimerization of the capsid protein; the sequence is DNKGR. The segment at 269–280 is functions as an uncleaved signal peptide for the precursor of protein E3/E2; the sequence is SAALMMCVLANV. Disulfide bonds link cysteine 275–cysteine 284, cysteine 289–cysteine 293, and cysteine 292–cysteine 324. An N-linked (GlcNAc...) asparagine; by host glycan is attached at asparagine 279. N-linked (GlcNAc...) asparagine; by host glycosylation is present at asparagine 325. At 333–694 the chain is on the extracellular side; that stretch reads SVTKHFNVYK…EIILYYYGLY (362 aa). 6 disulfide bridges follow: cysteine 351–cysteine 457, cysteine 354–cysteine 360, cysteine 423–cysteine 437, cysteine 485–cysteine 597, cysteine 533–cysteine 557, and cysteine 535–cysteine 552. Interaction with host Mxra8 receptor stretches follow at residues 358 to 361 and 394 to 396; these read QFCY and HEH. An interaction with host Mxra8 receptor region spans residues 516-519; it reads QSGN. An N-linked (GlcNAc...) asparagine; by host glycan is attached at asparagine 532. The segment at 548–554 is interaction with host Mxra8 receptor; the sequence is TINSCKI. Residue asparagine 594 is glycosylated (N-linked (GlcNAc...) asparagine; by host). Residues 695–715 form a helical membrane-spanning segment; sequence PAATIAAVSAAGLAVVLSLLA. Residues 716–754 lie on the Cytoplasmic side of the membrane; that stretch reads SCYMFATARRKCLTPYALTPGAVVPVTLGVLCCAPRAHA. Cysteine 717 is lipidated: S-stearoyl cysteine; by host. Residues 722–726 are interaction with the capsid protein; it reads TARRK. Cysteine 727 is lipidated: S-stearoyl cysteine; by host. A transient transmembrane before p62-6K protein processing region spans residues 727–747; the sequence is CLTPYALTPGAVVPVTLGVLC. Cysteine 727 and cysteine 748 are disulfide-bonded. 2 S-palmitoyl cysteine; by host lipidation sites follow: cysteine 747 and cysteine 748. Over 755 to 769 the chain is Extracellular; the sequence is ASFAESMAYLWDENQ. Asparagine 768 carries N-linked (GlcNAc...) asparagine; by host glycosylation. The helical transmembrane segment at 770-790 threads the bilayer; sequence TLFWLELATPLAAIIILVCCL. Over 791 to 792 the chain is Cytoplasmic; it reads KN. A helical transmembrane segment spans residues 793-813; that stretch reads LLCCCKPLSFLVLVSLGTPVV. Extracellular-facing segments span residues 814–815 and 826–1227; these read KS and VGFP…WVQR. Cystine bridges form between cysteine 864–cysteine 929, cysteine 877–cysteine 909, cysteine 878–cysteine 911, and cysteine 883–cysteine 893. The interval 899–916 is E1 fusion peptide loop; it reads VYPFMWGGAYCFCDTENT. 2 N-linked (GlcNAc...) asparagine; by host glycosylation sites follow: asparagine 956 and asparagine 1085. Disulfide bonds link cysteine 1074/cysteine 1086, cysteine 1116/cysteine 1191, cysteine 1121/cysteine 1195, and cysteine 1143/cysteine 1185. A helical transmembrane segment spans residues 1228 to 1248; the sequence is VAGGLGGLTLAAVAVLILVTC. The S-palmitoyl cysteine; by host moiety is linked to residue cysteine 1248. Topologically, residues 1249–1253 are cytoplasmic; it reads VTMRR.

Homodimer. Homomultimer. Interacts with host karyopherin KPNA4; this interaction allows the nuclear import of the viral capsid protein. Interacts with spike glycoprotein E2. Interacts with host IRAK1; the interaction leads to inhibition of IRAK1-dependent signaling. In terms of assembly, the precursor of protein E3/E2 and E1 form a heterodimer shortly after synthesis. As to quaternary structure, interacts with spike glycoprotein E2. The precursor of protein E3/E2 and E1 form a heterodimer shortly after synthesis. Processing of the precursor of protein E3/E2 into E2 and E3 results in a heterodimer of the spike glycoproteins E2 and E1. Spike at virion surface are constituted of a trimer of E2-E1 heterodimers. After target cell attachment and endocytosis, E1 change conformation to form homotrimers. Interacts with 6K protein. E1/E2 heterodimer interacts with host LDLR. Interacts with spike glycoprotein E1. Processing of the precursor of protein E3/E2 into E2 and E3 results in a heterodimer of the spike glycoproteins E2 and E1. Spike at virion surface are constituted of a trimer of E2-E1 heterodimers. Interacts with 6K protein. Interacts with host MXRA8; this interaction mediates virus entry. In terms of assembly, oligomer. Interacts with spike glycoprotein E1. Interacts with spike glycoprotein E2. Post-translationally, structural polyprotein: Specific enzymatic cleavages in vivo yield mature proteins. Capsid protein is auto-cleaved during polyprotein translation, unmasking a signal peptide at the N-terminus of the precursor of E3/E2. The remaining polyprotein is then targeted to the host endoplasmic reticulum, where host signal peptidase cleaves it into pE2, 6K and E1 proteins. pE2 is further processed to mature E3 and E2 by host furin in trans-Golgi vesicle. In terms of processing, palmitoylated via thioester bonds. These palmitoylations may induce disruption of the C-terminus transmembrane. This would result in the reorientation of E2 C-terminus from lumenal to cytoplasmic side. N-glycosylated. Post-translationally, palmitoylated via thioester bonds.

The protein resides in the virion. The protein localises to the host cytoplasm. Its subcellular location is the host cell membrane. It localises to the host nucleus. It is found in the virion membrane. The protein resides in the host Golgi apparatus. The protein localises to the host trans-Golgi network. Its subcellular location is the host endoplasmic reticulum. It catalyses the reaction Autocatalytic release of the core protein from the N-terminus of the togavirus structural polyprotein by hydrolysis of a -Trp-|-Ser- bond.. Its function is as follows. Forms an icosahedral capsid with a T=4 symmetry composed of 240 copies of the capsid protein surrounded by a lipid membrane through which penetrate 80 spikes composed of trimers of E1-E2 heterodimers. The capsid protein binds to the viral RNA genome at a site adjacent to a ribosome binding site for viral genome translation following genome release. Possesses a protease activity that results in its autocatalytic cleavage from the nascent structural protein. Following its self-cleavage, the capsid protein transiently associates with ribosomes, and within several minutes the protein binds to viral RNA and rapidly assembles into icosahedric core particles. The resulting nucleocapsid eventually associates with the cytoplasmic domain of the spike glycoprotein E2 at the cell membrane, leading to budding and formation of mature virions. In case of infection, new virions attach to target cells and after clathrin-mediated endocytosis their membrane fuses with the host endosomal membrane. This leads to the release of the nucleocapsid into the cytoplasm, followed by an uncoating event necessary for the genomic RNA to become accessible. The uncoating might be triggered by the interaction of capsid proteins with ribosomes. Binding of ribosomes would release the genomic RNA since the same region is genomic RNA-binding and ribosome-binding. Specifically inhibits interleukin-1 receptor-associated kinase 1/IRAK1-dependent signaling during viral entry, representing a means by which the alphaviruses may evade innate immune detection and activation prior to viral gene expression. In terms of biological role, provides the signal sequence for the translocation of the precursor of protein E3/E2 to the host endoplasmic reticulum. Furin-cleaved E3 remains associated with spike glycoprotein E1 and mediates pH protection of the latter during the transport via the secretory pathway. After virion release from the host cell, the assembly protein E3 is gradually released in the extracellular space. Functionally, plays a role in viral attachment to target host cell, by binding to the cell receptor MXRA8. The host LDLR may also act as a cell receptor for viral entry. Synthesized as a p62 precursor which is processed by furin at the cell membrane just before virion budding, giving rise to E2-E1 heterodimer. The p62-E1 heterodimer is stable, whereas E2-E1 is unstable and dissociate at low pH. p62 is processed at the last step, presumably to avoid E1 fusion activation before its final export to cell surface. E2 C-terminus contains a transitory transmembrane that would be disrupted by palmitoylation, resulting in reorientation of the C-terminal tail from lumenal to cytoplasmic side. This step is critical since E2 C-terminus is involved in budding by interacting with capsid proteins. This release of E2 C-terminus in cytoplasm occurs lately in protein export, and precludes premature assembly of particles at the endoplasmic reticulum membrane. Acts as a viroporin that participates in virus glycoprotein processing and transport to the plasma membrane, cell permeabilization and budding of viral particles. Disrupts the calcium homeostasis of the cell, probably at the endoplasmic reticulum level. This leads to cytoplasmic calcium elevation. Because of its lipophilic properties, the 6K protein is postulated to influence the selection of lipids that interact with the transmembrane domains of the glycoproteins, which, in turn, affects the deformability of the bilayer required for the extreme curvature that occurs as budding proceeds. Present in low amount in virions, about 3% compared to viral glycoproteins. Its function is as follows. Class II viral fusion protein. Fusion activity is inactive as long as E1 is bound to E2 in mature virion. After virus attachment to target cell via host MXRA8 and endocytosis, acidification of the endosome induce dissociation of E1/E2 heterodimer and concomitant trimerization of the E1 subunits. This E1 trimer is fusion active, and promotes release of viral nucleocapsid in cytoplasm after endosome and viral membrane fusion. Efficient fusion requires the presence of cholesterol and sphingolipid in the target membrane. The protein is Structural polyprotein of Aedes vexans (Inland floodwater mosquito).